The chain runs to 450 residues: Signal recognition particle protein (450 aa).

GTP contacts are provided by residues 107–114 (GLQGVGKT), 190–194 (DTAGR), and 248–251 (TKTD).

This sequence belongs to the GTP-binding SRP family. SRP54 subfamily. In terms of assembly, part of the signal recognition particle protein translocation system, which is composed of SRP and FtsY. SRP is a ribonucleoprotein composed of Ffh and a 4.5S RNA molecule.

Its subcellular location is the cytoplasm. It catalyses the reaction GTP + H2O = GDP + phosphate + H(+). Involved in targeting and insertion of nascent membrane proteins into the cytoplasmic membrane. Binds to the hydrophobic signal sequence of the ribosome-nascent chain (RNC) as it emerges from the ribosomes. The SRP-RNC complex is then targeted to the cytoplasmic membrane where it interacts with the SRP receptor FtsY. Interaction with FtsY leads to the transfer of the RNC complex to the Sec translocase for insertion into the membrane, the hydrolysis of GTP by both Ffh and FtsY, and the dissociation of the SRP-FtsY complex into the individual components. The polypeptide is Signal recognition particle protein (Buchnera aphidicola subsp. Schizaphis graminum (strain Sg)).